The following is a 277-amino-acid chain: Large ribosomal subunit protein uL2 (277 aa).

The segment at 226–277 is disordered; the sequence is MNPVDHPHGGGEGRSPIGMPSPVTPWGKPTLGYKTRKPNKKSDRLIVSRRKK.

The protein belongs to the universal ribosomal protein uL2 family. Part of the 50S ribosomal subunit. Forms a bridge to the 30S subunit in the 70S ribosome.

Its function is as follows. One of the primary rRNA binding proteins. Required for association of the 30S and 50S subunits to form the 70S ribosome, for tRNA binding and peptide bond formation. It has been suggested to have peptidyltransferase activity; this is somewhat controversial. Makes several contacts with the 16S rRNA in the 70S ribosome. This Symbiobacterium thermophilum (strain DSM 24528 / JCM 14929 / IAM 14863 / T) protein is Large ribosomal subunit protein uL2.